We begin with the raw amino-acid sequence, 272 residues long: Bis(5'-nucleosyl)-tetraphosphatase, symmetrical (272 aa).

This sequence belongs to the Ap4A hydrolase family.

The enzyme catalyses P(1),P(4)-bis(5'-adenosyl) tetraphosphate + H2O = 2 ADP + 2 H(+). Hydrolyzes diadenosine 5',5'''-P1,P4-tetraphosphate to yield ADP. The polypeptide is Bis(5'-nucleosyl)-tetraphosphatase, symmetrical (Wigglesworthia glossinidia brevipalpis).